The following is a 309-amino-acid chain: Serine/threonine-protein phosphatase 2A catalytic subunit beta isoform (309 aa).

Positions 57, 59, 85, and 117 each coordinate Mn(2+). His-118 acts as the Proton donor in catalysis. Residues His-167 and His-241 each coordinate Mn(2+). Phosphotyrosine is present on Tyr-307. Leu-309 is subject to Leucine methyl ester.

It belongs to the PPP phosphatase family. PP-1 subfamily. In terms of assembly, PP2A consists of a common heterodimeric core enzyme (composed of a 36 kDa catalytic subunit (subunit C) and a 65 kDa constant regulatory subunit (PR65) (subunit A)) that associates with a variety of regulatory subunits. Proteins that associate with the core dimer include three families of regulatory subunits B (the R2/B/PR55/B55, R3/B''/PR72/PR130/PR59 and R5/B'/B56 families), the 48 kDa variable regulatory subunit, viral proteins, and cell signaling molecules. Binds PPME1. May indirectly interact with SGO1, most probably through regulatory B56 subunits. Interacts with CTTNBP2NL. Interacts with PTPA. Found in a complex with at least ARL2, PPP2CB, PPP2R1A, PPP2R2A, PPP2R5E and TBCD. Interacts with TBCD. Part of the core of STRIPAK complexes composed of PP2A catalytic and scaffolding subunits, the striatins (PP2A regulatory subunits), the striatin-associated proteins MOB4, STRIP1 and STRIP2, PDCD10 and members of the STE20 kinases, such as STK24 and STK26. Mn(2+) is required as a cofactor. In terms of processing, reversibly methyl esterified on Leu-309 by leucine carboxyl methyltransferase 1 (Lcmt1) and protein phosphatase methylesterase 1 (Ppme1). Carboxyl methylation influences the affinity of the catalytic subunit for the different regulatory subunits, thereby modulating the PP2A holoenzyme's substrate specificity, enzyme activity and cellular localization. Post-translationally, phosphorylation of either threonine (by autophosphorylation-activated protein kinase) or tyrosine results in inactivation of the phosphatase. Auto-dephosphorylation has been suggested as a mechanism for reactivation. May be monoubiquitinated by NOSIP.

The protein localises to the cytoplasm. It is found in the nucleus. Its subcellular location is the chromosome. It localises to the centromere. The protein resides in the cytoskeleton. The protein localises to the spindle pole. It catalyses the reaction O-phospho-L-seryl-[protein] + H2O = L-seryl-[protein] + phosphate. It carries out the reaction O-phospho-L-threonyl-[protein] + H2O = L-threonyl-[protein] + phosphate. Catalytic subunit of protein phosphatase 2A (PP2A), a serine/threonine phosphatase involved in the regulation of a wide variety of enzymes, signal transduction pathways, and cellular events. PP2A can modulate the activity of phosphorylase B kinase, casein kinase 2, mitogen-stimulated S6 kinase, and MAP-2 kinase. Part of the striatin-interacting phosphatase and kinase (STRIPAK) complexes. STRIPAK complexes have critical roles in protein (de)phosphorylation and are regulators of multiple signaling pathways including Hippo, MAPK, nuclear receptor and cytoskeleton remodeling. Different types of STRIPAK complexes are involved in a variety of biological processes such as cell growth, differentiation, apoptosis, metabolism and immune regulation. The sequence is that of Serine/threonine-protein phosphatase 2A catalytic subunit beta isoform (Ppp2cb) from Mus musculus (Mouse).